Reading from the N-terminus, the 46-residue chain is Protein YmiA (46 aa).

A helical membrane pass occupies residues 22-42; sequence AWLAVFLGSALFWVVVALLIW.

The protein resides in the cell inner membrane. The sequence is that of Protein YmiA (ymiA) from Escherichia coli (strain K12).